The chain runs to 172 residues: Bacilliredoxin SRU_0242 (172 aa).

The interval 141 to 172 is disordered; it reads TDEAPPSDAPSRPDLSSSPNAGGLPSTFQSIS. Residues 154–172 show a composition bias toward polar residues; sequence DLSSSPNAGGLPSTFQSIS.

This sequence belongs to the bacilliredoxin family.

The polypeptide is Bacilliredoxin SRU_0242 (Salinibacter ruber (strain DSM 13855 / M31)).